Consider the following 253-residue polypeptide: Phycobilisome rod-core linker polypeptide CpcG4 (253 aa).

In terms of domain architecture, PBS-linker spans 11-191; the sequence is SSQNHRVTSF…DFQEKAGTVQ (181 aa).

The protein belongs to the phycobilisome linker protein family. In terms of assembly, part of the phycobilisome, a hemidiscoidal structure that is composed of two distinct substructures: a core complex and a number of rods radiating from the core.

The protein resides in the cellular thylakoid membrane. Rod-core linker protein required for attachment of phycocyanin to allophycocyanin in cores of phycobilisomes. Functionally, linker polypeptides determine the state of aggregation and the location of the disk-shaped phycobiliprotein units within the phycobilisome and modulate their spectroscopic properties in order to mediate a directed and optimal energy transfer. The polypeptide is Phycobilisome rod-core linker polypeptide CpcG4 (Nostoc sp. (strain PCC 7120 / SAG 25.82 / UTEX 2576)).